The chain runs to 109 residues: Phosphoribosyl-ATP pyrophosphatase (109 aa).

This sequence belongs to the PRA-PH family.

It localises to the cytoplasm. It carries out the reaction 1-(5-phospho-beta-D-ribosyl)-ATP + H2O = 1-(5-phospho-beta-D-ribosyl)-5'-AMP + diphosphate + H(+). Its pathway is amino-acid biosynthesis; L-histidine biosynthesis; L-histidine from 5-phospho-alpha-D-ribose 1-diphosphate: step 2/9. The protein is Phosphoribosyl-ATP pyrophosphatase of Geobacter metallireducens (strain ATCC 53774 / DSM 7210 / GS-15).